Consider the following 98-residue polypeptide: NADH-ubiquinone oxidoreductase chain 4L (98 aa).

A run of 3 helical transmembrane segments spans residues 1–21, 29–49, and 61–81; these read MTPT…GMLT, SLLC…LIAL, and IILL…LVSI.

It belongs to the complex I subunit 4L family. Core subunit of respiratory chain NADH dehydrogenase (Complex I) which is composed of 45 different subunits.

Its subcellular location is the mitochondrion inner membrane. The enzyme catalyses a ubiquinone + NADH + 5 H(+)(in) = a ubiquinol + NAD(+) + 4 H(+)(out). In terms of biological role, core subunit of the mitochondrial membrane respiratory chain NADH dehydrogenase (Complex I) which catalyzes electron transfer from NADH through the respiratory chain, using ubiquinone as an electron acceptor. Part of the enzyme membrane arm which is embedded in the lipid bilayer and involved in proton translocation. In Macaca pagensis (Mentawai macaque), this protein is NADH-ubiquinone oxidoreductase chain 4L (MT-ND4L).